Here is a 358-residue protein sequence, read N- to C-terminus: Mesaconyl-CoA hydratase (358 aa).

Belongs to the enoyl-CoA hydratase/isomerase family. As to quaternary structure, homodimer.

The catalysed reaction is (2R,3S)-beta-methylmalyl-CoA = 2-methylfumaryl-CoA + H2O. With respect to regulation, shows highest activity at 0.5 M KCl. Does not require divalent ions for activity. In terms of biological role, involved in the methylaspartate cycle. Catalyzes the reversible hydration of mesaconyl-CoA (2-methylfumaryl-CoA) to yield beta-methylmalyl-CoA ((2R,3S)-beta-methylmalyl-CoA). Also shows activity with mesaconyl-C4-CoA (3-methylfumaryl-CoA), (S)-citramalyl-CoA and (S)-malyl-CoA. The polypeptide is Mesaconyl-CoA hydratase (Haloarcula hispanica (strain ATCC 33960 / DSM 4426 / JCM 8911 / NBRC 102182 / NCIMB 2187 / VKM B-1755)).